A 228-amino-acid polypeptide reads, in one-letter code: MDMMMMSTRLIHLSRHFPQYGFRCHPSGLISSARMQYNINNGLAHMGKQMPNTSTHTTRIHPASFSSDLASRKYSLIYAFPLIRGLRALSRLKLLQTGITVVLLPTVYYLHLQGQASVLVLNRSIGIALFAGVMLYSISHFVRRVVGMMYLDSTQTILKVSHLSFWGHRRDIYVPVSDVVTLGDSGDSRGESILRLKRYSTSNTMYFSTRLGRVVDRHAFGKVFGSLS.

The Mitochondrial matrix segment spans residues 1–93; sequence MDMMMMSTRL…RGLRALSRLK (93 aa). Residues 94–112 form a helical membrane-spanning segment; the sequence is LLQTGITVVLLPTVYYLHL. The Mitochondrial intermembrane segment spans residues 113 to 118; that stretch reads QGQASV. The chain crosses the membrane as a helical span at residues 119 to 141; the sequence is LVLNRSIGIALFAGVMLYSISHF. Over 142-228 the chain is Mitochondrial matrix; it reads VRRVVGMMYL…AFGKVFGSLS (87 aa).

Belongs to the TMEM186 family.

The protein localises to the mitochondrion inner membrane. May be required for efficient assembly of the mitochondrial complex I. This is Transmembrane protein 186 from Danio rerio (Zebrafish).